The primary structure comprises 604 residues: Aspartate--tRNA(Asp/Asn) ligase (604 aa).

Glu-175 contacts L-aspartate. Positions 199 to 202 (QQFK) are aspartate. L-aspartate is bound by residues Arg-221 and His-456. 221–223 (RDE) is an ATP binding site. An ATP-binding site is contributed by Glu-496. Residue Arg-503 coordinates L-aspartate. An ATP-binding site is contributed by 548-551 (GVDR).

The protein belongs to the class-II aminoacyl-tRNA synthetase family. Type 1 subfamily. Homodimer.

It localises to the cytoplasm. The enzyme catalyses tRNA(Asx) + L-aspartate + ATP = L-aspartyl-tRNA(Asx) + AMP + diphosphate. Functionally, aspartyl-tRNA synthetase with relaxed tRNA specificity since it is able to aspartylate not only its cognate tRNA(Asp) but also tRNA(Asn). Reaction proceeds in two steps: L-aspartate is first activated by ATP to form Asp-AMP and then transferred to the acceptor end of tRNA(Asp/Asn). The protein is Aspartate--tRNA(Asp/Asn) ligase of Methylorubrum populi (strain ATCC BAA-705 / NCIMB 13946 / BJ001) (Methylobacterium populi).